The following is a 268-amino-acid chain: MAARKAAKKLTDRIPRPKKKVTWPQARAFSVHLLTASGSFLAFLSLVAASEERWTAMFWWLGLALFVDGIDGPIARKLEVKEILPTWSGELLDNIIDYVTYVLIPAFALYQRGFMGEGLSFLSAAIIVVSSAIYYADTGMKTKENFFKGFPVVWNMVVFTLFVIEPGQWVSFAVVVVAGILTFVPINFIHPVRVVRLRPFNLTMTLLWCAFGALALAQAALAAFYDQIGVLGAQVSTFIKIGITITGLYLACIGGIMQFFPNLGAKKA.

Over 1–27 (MAARKAAKKLTDRIPRPKKKVTWPQAR) the chain is Cytoplasmic. Residues 28–48 (AFSVHLLTASGSFLAFLSLVA) form a helical membrane-spanning segment. At 49–53 (ASEER) the chain is on the periplasmic side. A helical transmembrane segment spans residues 54-74 (WTAMFWWLGLALFVDGIDGPI). Topologically, residues 75-88 (ARKLEVKEILPTWS) are cytoplasmic. Residues 89–109 (GELLDNIIDYVTYVLIPAFAL) form a helical membrane-spanning segment. At 110–112 (YQR) the chain is on the periplasmic side. The chain crosses the membrane as a helical span at residues 113–133 (GFMGEGLSFLSAAIIVVSSAI). The Cytoplasmic portion of the chain corresponds to 134 to 145 (YYADTGMKTKEN). A helical transmembrane segment spans residues 146–166 (FFKGFPVVWNMVVFTLFVIEP). At 167–168 (GQ) the chain is on the periplasmic side. The helical transmembrane segment at 169–189 (WVSFAVVVVAGILTFVPINFI) threads the bilayer. Over 190–203 (HPVRVVRLRPFNLT) the chain is Cytoplasmic. Residues 204 to 224 (MTLLWCAFGALALAQAALAAF) form a helical membrane-spanning segment. At 225 to 240 (YDQIGVLGAQVSTFIK) the chain is on the periplasmic side. A helical transmembrane segment spans residues 241 to 261 (IGITITGLYLACIGGIMQFFP). Residues 262 to 268 (NLGAKKA) lie on the Cytoplasmic side of the membrane.

This sequence belongs to the CDP-alcohol phosphatidyltransferase class-I family. The cofactor is Mn(2+).

The protein localises to the cell inner membrane. The enzyme catalyses a CDP-1,2-diacyl-sn-glycerol + choline = a 1,2-diacyl-sn-glycero-3-phosphocholine + CMP + H(+). Condenses choline with CDP-diglyceride to produce phosphatidylcholine and CMP. This is Phosphatidylcholine synthase (pcs) from Mesorhizobium japonicum (strain LMG 29417 / CECT 9101 / MAFF 303099) (Mesorhizobium loti (strain MAFF 303099)).